Here is a 201-residue protein sequence, read N- to C-terminus: Recombination protein RecR (201 aa).

The C4-type zinc finger occupies 60 to 75; the sequence is CSVCGNVDSCDPCTIC. Positions 83-178 constitute a Toprim domain; sequence STLIVVETVG…RTTRLAHGVP (96 aa).

The protein belongs to the RecR family.

Its function is as follows. May play a role in DNA repair. It seems to be involved in an RecBC-independent recombinational process of DNA repair. It may act with RecF and RecO. The polypeptide is Recombination protein RecR (Methylocella silvestris (strain DSM 15510 / CIP 108128 / LMG 27833 / NCIMB 13906 / BL2)).